Here is a 480-residue protein sequence, read N- to C-terminus: Altronate oxidoreductase (480 aa).

NAD(+) is bound at residue 19 to 30; that stretch reads ILQFGEGNFLRG.

The protein belongs to the mannitol dehydrogenase family. UxaB subfamily.

It carries out the reaction D-altronate + NAD(+) = keto-D-tagaturonate + NADH + H(+). It functions in the pathway carbohydrate metabolism; pentose and glucuronate interconversion. This chain is Altronate oxidoreductase, found in Bacillus subtilis (strain 168).